Consider the following 211-residue polypeptide: Leucyl/phenylalanyl-tRNA--protein transferase (211 aa).

Belongs to the L/F-transferase family.

It localises to the cytoplasm. It catalyses the reaction N-terminal L-lysyl-[protein] + L-leucyl-tRNA(Leu) = N-terminal L-leucyl-L-lysyl-[protein] + tRNA(Leu) + H(+). The enzyme catalyses N-terminal L-arginyl-[protein] + L-leucyl-tRNA(Leu) = N-terminal L-leucyl-L-arginyl-[protein] + tRNA(Leu) + H(+). The catalysed reaction is L-phenylalanyl-tRNA(Phe) + an N-terminal L-alpha-aminoacyl-[protein] = an N-terminal L-phenylalanyl-L-alpha-aminoacyl-[protein] + tRNA(Phe). Functions in the N-end rule pathway of protein degradation where it conjugates Leu, Phe and, less efficiently, Met from aminoacyl-tRNAs to the N-termini of proteins containing an N-terminal arginine or lysine. The chain is Leucyl/phenylalanyl-tRNA--protein transferase from Flavobacterium psychrophilum (strain ATCC 49511 / DSM 21280 / CIP 103535 / JIP02/86).